Here is a 214-residue protein sequence, read N- to C-terminus: Ribosomal RNA small subunit methyltransferase G (214 aa).

S-adenosyl-L-methionine contacts are provided by residues Gly77, Leu82, Val128–Glu129, and Arg143.

The protein belongs to the methyltransferase superfamily. RNA methyltransferase RsmG family.

The protein localises to the cytoplasm. The enzyme catalyses guanosine(527) in 16S rRNA + S-adenosyl-L-methionine = N(7)-methylguanosine(527) in 16S rRNA + S-adenosyl-L-homocysteine. In terms of biological role, specifically methylates the N7 position of guanine in position 527 of 16S rRNA. The chain is Ribosomal RNA small subunit methyltransferase G from Nitrosococcus oceani (strain ATCC 19707 / BCRC 17464 / JCM 30415 / NCIMB 11848 / C-107).